The chain runs to 776 residues: Isoamylase (776 aa).

An N-terminal signal peptide occupies residues 1–26 (MKCPKILAALLGCAVLAGVPAMPAHA). Residues Asp-154, Glu-255, Thr-256, Asn-258, and Asp-285 each coordinate Ca(2+). Asp-401 functions as the Nucleophile in the catalytic mechanism. The cysteines at positions 410 and 422 are disulfide-linked. Glu-461 (proton donor) is an active-site residue. Cystine bridges form between Cys-546-Cys-616 and Cys-738-Cys-766.

It belongs to the glycosyl hydrolase 13 family. As to quaternary structure, monomer. Requires Ca(2+) as cofactor.

Its subcellular location is the secreted. The enzyme catalyses Hydrolysis of (1-&gt;6)-alpha-D-glucosidic branch linkages in glycogen, amylopectin and their beta-limit dextrins.. In Pseudomonas amyloderamosa, this protein is Isoamylase (iam).